We begin with the raw amino-acid sequence, 1151 residues long: Chromosome partition protein Smc (1151 aa).

32–39 (PNGCGKSN) is a binding site for ATP. Coiled coils occupy residues 170–218 (ISGL…AARY), 342–379 (IGRLEWEREALETAHEGHEERLAEAAEAAREAGAALGE), 407–508 (DSRT…REAQ), and 633–994 (LKQL…EGRE). 2 stretches are compositionally biased toward basic and acidic residues: residues 421–438 (RARETVEAAAEAQERAAE) and 465–480 (DEARAEAQSREAEARA). 3 disordered regions span residues 421-483 (RARE…AQRS), 806-826 (SAELAERKAETEEALREAAEA), and 862-889 (LRAAQEAEREAERQAGESREARARAEAR). Residues 866-889 (QEAEREAERQAGESREARARAEAR) show a composition bias toward basic and acidic residues.

It belongs to the SMC family. In terms of assembly, homodimer.

The protein resides in the cytoplasm. In terms of biological role, required for chromosome condensation and partitioning. This Cereibacter sphaeroides (strain ATCC 17029 / ATH 2.4.9) (Rhodobacter sphaeroides) protein is Chromosome partition protein Smc.